The chain runs to 276 residues: MTAASTTATTVLQATQSDVLQEIQSNFLLNSSIWVNIALAGVVILLFVAMGRDLESPRAKLIWVATMLVPLVSISSYAGLASGLTVGFLQMPPGHALAGQEVLSPWGRYLTWTFSTPMILLALGLLADTDIASLFTAITMDIGMCVTGLAAALITSSHLLRWVFYGISCAFFVAVLYVLLVQWPADAEAAGTSEIFGTLKILTVVLWLGYPILWALGSEGVALLSVGVTSWGYSGLDILAKYVFAFLLLRWVAANEGTVSGSGMGIGSGGATPADD.

A propeptide spanning residues 1 to 20 is cleaved from the precursor; that stretch reads MTAASTTATTVLQATQSDVL. Gln-21 bears the Pyrrolidone carboxylic acid mark. Helical transmembrane passes span 31-51, 61-81, 109-129, 134-154, 162-182, 195-215, and 220-240; these read SSIWVNIALAGVVILLFVAMG, LIWVATMLVPLVSISSYAGLA, YLTWTFSTPMILLALGLLADT, LFTAITMDIGMCVTGLAAALI, WVFYGISCAFFVAVLYVLLVQ, IFGTLKILTVVLWLGYPILWA, and GVALLSVGVTSWGYSGLDILA. Lys-241 is subject to N6-(retinylidene)lysine.

The protein belongs to the archaeal/bacterial/fungal opsin family. Post-translationally, the covalent binding of retinal to the apoprotein, bacterioopsin, generates bacteriorhodopsin.

It localises to the membrane. Functionally, light-driven chloride pump. This is Halorhodopsin (hop) from Haloarcula marismortui (strain ATCC 43049 / DSM 3752 / JCM 8966 / VKM B-1809) (Halobacterium marismortui).